A 360-amino-acid chain; its full sequence is Isopentenyl-diphosphate delta-isomerase (360 aa).

12–13 (RK) serves as a coordination point for substrate. Residues 69-71 (SMT), serine 99, and asparagine 130 contribute to the FMN site. Substrate is bound at residue 99 to 101 (SQR). Glutamine 164 contacts substrate. A Mg(2+)-binding site is contributed by glutamate 165. Residues lysine 196, threonine 226, 277–279 (GVR), and 298–299 (AK) contribute to the FMN site.

This sequence belongs to the IPP isomerase type 2 family. Homooctamer. Dimer of tetramers. The cofactor is FMN. Requires NADPH as cofactor. Mg(2+) is required as a cofactor.

The protein resides in the cytoplasm. The enzyme catalyses isopentenyl diphosphate = dimethylallyl diphosphate. In terms of biological role, involved in the biosynthesis of isoprenoids. Catalyzes the 1,3-allylic rearrangement of the homoallylic substrate isopentenyl (IPP) to its allylic isomer, dimethylallyl diphosphate (DMAPP). This chain is Isopentenyl-diphosphate delta-isomerase, found in Halobacterium salinarum (strain ATCC 700922 / JCM 11081 / NRC-1) (Halobacterium halobium).